We begin with the raw amino-acid sequence, 426 residues long: Enolase (426 aa).

A (2R)-2-phosphoglycerate-binding site is contributed by Gln163. Glu205 functions as the Proton donor in the catalytic mechanism. Mg(2+) contacts are provided by Asp242, Glu285, and Asp312. 4 residues coordinate (2R)-2-phosphoglycerate: Lys337, Arg366, Ser367, and Lys388. The active-site Proton acceptor is Lys337.

It belongs to the enolase family. The cofactor is Mg(2+).

It localises to the cytoplasm. Its subcellular location is the secreted. The protein resides in the cell surface. The enzyme catalyses (2R)-2-phosphoglycerate = phosphoenolpyruvate + H2O. It participates in carbohydrate degradation; glycolysis; pyruvate from D-glyceraldehyde 3-phosphate: step 4/5. Functionally, catalyzes the reversible conversion of 2-phosphoglycerate (2-PG) into phosphoenolpyruvate (PEP). It is essential for the degradation of carbohydrates via glycolysis. The sequence is that of Enolase from Gluconobacter oxydans (strain 621H) (Gluconobacter suboxydans).